The sequence spans 412 residues: FAD-dependent monooxygenase nscC (412 aa).

Residues 1–21 (MGKQQETILIIGAGIAGLTTS) form the signal peptide. The FAD site is built by E35 and A46. The N-linked (GlcNAc...) asparagine glycan is linked to N92. An FAD-binding site is contributed by R119. Residues N170 and N231 are each glycosylated (N-linked (GlcNAc...) asparagine). Residues D326 and G339 each contribute to the FAD site.

This sequence belongs to the paxM FAD-dependent monooxygenase family. It depends on FAD as a cofactor.

It participates in secondary metabolite biosynthesis. FAD-dependent monooxygenase; part of the gene cluster that mediates the biosynthesis of neosartoricin B, a prenylated anthracenone that probably exhibits T-cell antiproliferative activity, suggestive of a physiological role as an immunosuppressive agent. The non-reducing polyketide synthase nscA probably synthesizes and cyclizes the decaketide backbone. The hydrolase nscB then mediates the product release through hydrolysis followed by spontaneous decarboxylation. The prenyltransferase nscD catalyzes the addition of the dimethylallyl group to the aromatic C5. The FAD-dependent monooxygenase nscC is then responsible for the stereospecific hydroxylation at C2. Neosartoricin B can be converted into two additional compounds neosartoricins C and D. Neosartoricin C is a spirocyclic compound that is cyclized through the attack of C3 hydroxyl on C14, followed by dehydration. On the other hand, neosartoricin D is a further cyclized compound in which attack of C2 on C14 in neosartoricin C results in the formation of the acetal-containing dioxabicyclo-octanone ring. Both of these compounds are novel and possibly represent related metabolites of the gene cluster. The chain is FAD-dependent monooxygenase nscC from Trichophyton verrucosum (strain HKI 0517).